The primary structure comprises 738 residues: Squalene hopane cyclase afumA (738 aa).

PFTB repeat units follow at residues 132-173 (GSQY…RIIG) and 321-361 (RRRC…KLHD). The Proton donor role is filled by Asp460. 3 PFTB repeats span residues 482–523 (VRDA…ESLC), 581–621 (CARA…QYFK), and 634–675 (AARA…SQTA).

The protein belongs to the terpene cyclase/mutase family.

The protein operates within secondary metabolite biosynthesis. Its function is as follows. Squalene hopane cyclase; part of the gene cluster that mediates the biosynthesis fumihopaside A, a hopane-type glucoside that enhances the thermotolerance and UV resistance of N.fumigata. The first step of fumihopaside A biosynthesis is performed by the squalene hopane cyclase afumA that catalyzes the cyclization of 3S-oxidosqualene into the hopene 21-beta-H-hopane-3-beta,22-diol. The cytochrome P450 monooxygenase afumB is responsible for both hydroxylation at C-24 and oxidations at C-30 of the afumA product. The glycosyltransferase afumC then catalyzes the glycosylation at C-24, using UDP-D-glucose as a donor, to produce fumihopaside A. AfumC is also able to accept UDP-D-galactose and UDP-D-glucuronic acid as donors to yield minor derivatives. Fumihopaside B, another minor derivative produced, is different from fumihopaside A due to the presence of a double bond between C-22 and C-29. This is Squalene hopane cyclase afumA from Aspergillus fumigatus (strain CBS 144.89 / FGSC A1163 / CEA10) (Neosartorya fumigata).